Here is a 334-residue protein sequence, read N- to C-terminus: Myo-inositol 2-dehydrogenase (334 aa).

This sequence belongs to the Gfo/Idh/MocA family.

It carries out the reaction myo-inositol + NAD(+) = scyllo-inosose + NADH + H(+). It participates in polyol metabolism; myo-inositol metabolism. In terms of biological role, catalyzes the NAD(+)-dependent oxidation of myo-inositol (MI) to 2-keto-myo-inositol (scyllo-inosose), and thus probably functions in a myo-inositol degradation pathway together with IolM, IolN and IolO. Has no activity with scyllo-inositol and much reduced activity (78-fold lower catalytic efficiency) with 1D-chiro-inositol. The protein is Myo-inositol 2-dehydrogenase of Thermotoga maritima (strain ATCC 43589 / DSM 3109 / JCM 10099 / NBRC 100826 / MSB8).